The chain runs to 274 residues: Pantothenate synthetase (274 aa).

26–33 (MGNLHAGH) is a binding site for ATP. The active-site Proton donor is His33. Position 57 (Gln57) interacts with (R)-pantoate. Gln57 contributes to the beta-alanine binding site. 143-146 (GKKD) provides a ligand contact to ATP. (R)-pantoate is bound at residue Gln149. Residues Val172 and 180-183 (LSSR) each bind ATP.

Belongs to the pantothenate synthetase family. As to quaternary structure, homodimer.

Its subcellular location is the cytoplasm. It catalyses the reaction (R)-pantoate + beta-alanine + ATP = (R)-pantothenate + AMP + diphosphate + H(+). The protein operates within cofactor biosynthesis; (R)-pantothenate biosynthesis; (R)-pantothenate from (R)-pantoate and beta-alanine: step 1/1. Its function is as follows. Catalyzes the condensation of pantoate with beta-alanine in an ATP-dependent reaction via a pantoyl-adenylate intermediate. This is Pantothenate synthetase from Dechloromonas aromatica (strain RCB).